Reading from the N-terminus, the 577-residue chain is MRMKQLYAPTLKETPSDVETVSHEYLLRGGFIRKVAAGIYTYLPLGRRVLLKIENIVREEMNRIGAQEILMPILQPAELWKRSGRWDDYGPEMMKLKDRHERDFTLGPTHEEIVTDLVKNELRSYRQLPLVVYQVANKYRDEIRPRFGLLRAREFIMKDAYSFHSSWESLDETYELFKEAYSRIMERLGVKYMVIEAETGAIGGNASHEFVVPAKIGETNVLYCEKCGYQASDEKAEYRGEYPVEEEEEKPLEKVPTPGVRTIEEVSQFLGVPPSKIVKSLLFVGRDGYVMALIRGDLELNEAKLKSHLKDQSLRLATPEEVLKDFGVPIGFIGPIGTNVKKVADHSIKGLKNFVVGGMEKDTHYVNANHPRDFKVDEWCDLRTVVEGDPCPVCGEPLRATKGIELGHIFKLGTKYSEAMEAYFMDENGEMKPFIMGCYGWGVSRTMAAVVEHFHDENGMIWPLSIAPYTVIVDILNMNDPDQKRVGEEIYRALLEKGEEVVLDDREVSPGFKFKDADLIGFPIRINVGRSLKDGVIELKKRYSKELVKVSIQNGLGSLFEALNRMKAEYDPREAIE.

Belongs to the class-II aminoacyl-tRNA synthetase family. ProS type 1 subfamily. Homodimer.

The protein resides in the cytoplasm. The catalysed reaction is tRNA(Pro) + L-proline + ATP = L-prolyl-tRNA(Pro) + AMP + diphosphate. Its function is as follows. Catalyzes the attachment of proline to tRNA(Pro) in a two-step reaction: proline is first activated by ATP to form Pro-AMP and then transferred to the acceptor end of tRNA(Pro). As ProRS can inadvertently accommodate and process non-cognate amino acids such as alanine and cysteine, to avoid such errors it has two additional distinct editing activities against alanine. One activity is designated as 'pretransfer' editing and involves the tRNA(Pro)-independent hydrolysis of activated Ala-AMP. The other activity is designated 'posttransfer' editing and involves deacylation of mischarged Ala-tRNA(Pro). The misacylated Cys-tRNA(Pro) is not edited by ProRS. This chain is Proline--tRNA ligase, found in Thermotoga neapolitana (strain ATCC 49049 / DSM 4359 / NBRC 107923 / NS-E).